A 242-amino-acid polypeptide reads, in one-letter code: Protein HTATIP2 (242 aa).

Alanine 2 is modified (N-acetylalanine). The required for interaction with elongation factor EEF1A1 stretch occupies residues alanine 2–glycine 25. The NADPH site is built by serine 27, glycine 28, glutamate 29, threonine 30, arginine 52, arginine 53, leucine 92, glycine 93, tyrosine 143, lysine 147, leucine 170, and arginine 178. Tyrosine 143 (proton acceptor) is an active-site residue. Lysine 147 is a catalytic residue.

As to quaternary structure, monomer. Forms homodimers during oxidative stress. Interacts (via N-terminus) with elongation factor EEF1A1 (via middle-region); the interaction is direct and competes with EEF1A1 binding to guanyl-nucleotide exchange factor EEF1B2, thereby inhibiting GDP for GTP exchange and reactivation of EEF1A1. Interacts with nuclear transport receptors XPO4, IPO5/RANBP5, IPO7, IPO9 and KPNB1 as well as GCN1L1/GCN1 and LRPPRC probably through their HEAT repeats. Binds NCOA5/CIA.

Represses translation by preventing reactivation of elongation factor eEF1A. May also inhibit nuclear import by competing with nuclear import substrates for binding to a subset of nuclear transport receptors. Has additionally been proposed to act as a redox sensor involved in cellular oxidative stress surveillance. May bind NADPH. The polypeptide is Protein HTATIP2 (Rattus norvegicus (Rat)).